The primary structure comprises 324 residues: D-alanine--D-alanine ligase (324 aa).

An ATP-grasp domain is found at 112–312 (KAVLAAAGVT…FDQLVLWIVE (201 aa)). 139–193 (LQPPYVVKPNAEGSSVGVFIIKEGANRPPEEVGAPSWTFGEEVMVEPYIQGMELA) lines the ATP pocket. Residues Asp-265, Glu-279, and Asn-281 each coordinate Mg(2+).

This sequence belongs to the D-alanine--D-alanine ligase family. Requires Mg(2+) as cofactor. Mn(2+) is required as a cofactor.

It localises to the cytoplasm. The catalysed reaction is 2 D-alanine + ATP = D-alanyl-D-alanine + ADP + phosphate + H(+). Its pathway is cell wall biogenesis; peptidoglycan biosynthesis. Cell wall formation. The polypeptide is D-alanine--D-alanine ligase (Caulobacter vibrioides (strain ATCC 19089 / CIP 103742 / CB 15) (Caulobacter crescentus)).